Here is a 455-residue protein sequence, read N- to C-terminus: Protein king tubby (455 aa).

The interval 35-92 (RPMSGMRGNSRELHAYDGPMQFIGSPHNPDQILSNNSSSVHLSSSMNSSRNNSNNLRS) is disordered. Over residues 67-92 (LSNNSSSVHLSSSMNSSRNNSNNLRS) the composition is skewed to low complexity. S144 bears the Phosphoserine mark.

This sequence belongs to the TUB family.

The protein resides in the cytoplasm. The protein localises to the nucleus. It localises to the cell projection. It is found in the cilium membrane. Its subcellular location is the rhabdomere. In Drosophila virilis (Fruit fly), this protein is Protein king tubby.